Reading from the N-terminus, the 776-residue chain is Transcription activator of gluconeogenesis HCAG_03671 (776 aa).

The tract at residues 1 to 70 is disordered; the sequence is MTASTQNGSP…NAKDPLRPRR (70 aa). 2 stretches are compositionally biased toward polar residues: residues 21 to 41 and 50 to 60; these read NQESKNMTANPADASESQSPA and ENGQKHTSTAA. Residues 77–105 constitute a DNA-binding region (zn(2)-C6 fungal-type); it reads CFACQRAHLTCGDERPCQRCIKRGLQDAC. Disordered stretches follow at residues 140–159, 179–248, 286–351, 556–593, and 651–726; these read RTNASQQQNGPNSNSNKDSR, TQAK…PFGA, GAGD…NIYN, NLNVNTGGSSPRGSGTFTPRNGNGVDPHSGMSASGGGG, and REAQ…SPKQ. Residues 142–155 show a composition bias toward low complexity; the sequence is NASQQQNGPNSNSN. Positions 195–217 are enriched in polar residues; that stretch reads MQDTSINPSAFQAPSPTSTPNFD. Positions 218 to 229 are enriched in low complexity; that stretch reads LSSNPPNRNLSS. Polar residues-rich tracts occupy residues 230-244, 292-322, 334-351, and 557-576; these read AMTQTPSSASNQTQD, PSDSATQRGSIGRSSGTFTAQNFGDSTNTQP, WNPSGQSQTNPRNNNIYN, and LNVNTGGSSPRGSGTFTPRN. Residues 657-669 are compositionally biased toward gly residues; sequence GPDGKGGGGGGGD. Positions 670 to 714 are enriched in low complexity; it reads VATTAATTSTSTSNGANSSGHANANRNNTNPNNSSPPSSSSAAAA.

This sequence belongs to the ERT1/acuK family.

The protein localises to the nucleus. Its function is as follows. Transcription factor which regulates nonfermentable carbon utilization. Activator of gluconeogenetic genes. The chain is Transcription activator of gluconeogenesis HCAG_03671 from Ajellomyces capsulatus (strain NAm1 / WU24) (Darling's disease fungus).